Consider the following 187-residue polypeptide: Adenine phosphoribosyltransferase (187 aa).

It belongs to the purine/pyrimidine phosphoribosyltransferase family. As to quaternary structure, homodimer.

It localises to the cytoplasm. It catalyses the reaction AMP + diphosphate = 5-phospho-alpha-D-ribose 1-diphosphate + adenine. Its pathway is purine metabolism; AMP biosynthesis via salvage pathway; AMP from adenine: step 1/1. Functionally, catalyzes a salvage reaction resulting in the formation of AMP, that is energically less costly than de novo synthesis. The polypeptide is Adenine phosphoribosyltransferase (Paracoccus denitrificans (strain Pd 1222)).